Here is a 350-residue protein sequence, read N- to C-terminus: Serine-threonine kinase receptor-associated protein (350 aa).

7 WD repeats span residues 12 to 56 (GHTR…GTFL), 57 to 96 (GHKG…ELMT), 98 to 137 (AHKH…AEPK), 141 to 179 (GHTS…EVKS), 180 to 212 (LNFN…HSAV), 221 to 262 (EAPA…ESYK), and 263 to 302 (GHFG…TYGL). 3 positions are modified to phosphoserine: Ser312, Ser335, and Ser338. The disordered stretch occupies residues 326–350 (AEEELEEIASENSDSIYSSTPEVKA). The span at 337–350 (NSDSIYSSTPEVKA) shows a compositional bias: polar residues. A Phosphotyrosine modification is found at Tyr342.

The protein belongs to the WD repeat STRAP family. In terms of assembly, part of the core SMN complex that contains SMN1, GEMIN2/SIP1, DDX20/GEMIN3, GEMIN4, GEMIN5, GEMIN6, GEMIN7, GEMIN8 and STRAP/UNRIP. Part of the SMN-Sm complex that contains SMN1, GEMIN2/SIP1, DDX20/GEMIN3, GEMIN4, GEMIN5, GEMIN6, GEMIN7, GEMIN8, STRAP/UNRIP and the Sm proteins SNRPB, SNRPD1, SNRPD2, SNRPD3, SNRPE, SNRPF and SNRPG. Interacts directly with GEMIN6 and GEMIN7. Associates with the SMN complex in the cytoplasm but not in the nucleus. Also interacts with CSDE1/UNR and MAWBP. Interacts with PDPK1. Interacts with TRIM48.

The protein resides in the cytoplasm. Its subcellular location is the nucleus. In terms of biological role, the SMN complex catalyzes the assembly of small nuclear ribonucleoproteins (snRNPs), the building blocks of the spliceosome, and thereby plays an important role in the splicing of cellular pre-mRNAs. Most spliceosomal snRNPs contain a common set of Sm proteins SNRPB, SNRPD1, SNRPD2, SNRPD3, SNRPE, SNRPF and SNRPG that assemble in a heptameric protein ring on the Sm site of the small nuclear RNA to form the core snRNP (Sm core). In the cytosol, the Sm proteins SNRPD1, SNRPD2, SNRPE, SNRPF and SNRPG are trapped in an inactive 6S pICln-Sm complex by the chaperone CLNS1A that controls the assembly of the core snRNP. To assemble core snRNPs, the SMN complex accepts the trapped 5Sm proteins from CLNS1A forming an intermediate. Binding of snRNA inside 5Sm triggers eviction of the SMN complex, thereby allowing binding of SNRPD3 and SNRPB to complete assembly of the core snRNP. STRAP plays a role in the cellular distribution of the SMN complex. Negatively regulates TGF-beta signaling but positively regulates the PDPK1 kinase activity by enhancing its autophosphorylation and by significantly reducing the association of PDPK1 with 14-3-3 protein. This is Serine-threonine kinase receptor-associated protein (Strap) from Mus musculus (Mouse).